Consider the following 144-residue polypeptide: Universal stress protein F (144 aa).

This sequence belongs to the universal stress protein A family. Homodimer.

This is Universal stress protein F (uspF) from Salmonella typhi.